Consider the following 237-residue polypeptide: tRNA (guanine-N(7)-)-methyltransferase (237 aa).

The S-adenosyl-L-methionine site is built by Asp35, Glu60, Asn87, and Asp113. The active site involves Asp113. The substrate site is built by Lys117 and Asp149.

This sequence belongs to the class I-like SAM-binding methyltransferase superfamily. TrmB family.

The enzyme catalyses guanosine(46) in tRNA + S-adenosyl-L-methionine = N(7)-methylguanosine(46) in tRNA + S-adenosyl-L-homocysteine. The protein operates within tRNA modification; N(7)-methylguanine-tRNA biosynthesis. Functionally, catalyzes the formation of N(7)-methylguanine at position 46 (m7G46) in tRNA. This is tRNA (guanine-N(7)-)-methyltransferase from Synechococcus sp. (strain CC9311).